The sequence spans 282 residues: Putative 23S rRNA (guanine-N(1)-)-methyltransferase YxjB (282 aa).

Cysteine 12, cysteine 15, cysteine 29, and histidine 34 together coordinate Zn(2+). Residue 103-104 (EG) participates in S-adenosyl-L-methionine binding.

It belongs to the methyltransferase superfamily. RlmA family.

The polypeptide is Putative 23S rRNA (guanine-N(1)-)-methyltransferase YxjB (yxjB) (Bacillus subtilis (strain 168)).